Here is a 134-residue protein sequence, read N- to C-terminus: Small ribosomal subunit protein uS8c (134 aa).

The protein belongs to the universal ribosomal protein uS8 family. In terms of assembly, part of the 30S ribosomal subunit.

It is found in the plastid. Its subcellular location is the chloroplast. Functionally, one of the primary rRNA binding proteins, it binds directly to 16S rRNA central domain where it helps coordinate assembly of the platform of the 30S subunit. The chain is Small ribosomal subunit protein uS8c (rps8) from Phaseolus angularis (Azuki bean).